We begin with the raw amino-acid sequence, 436 residues long: MTAHMADKPHLNMIVTGHIDNGKSTTMGHFLMDLGVVDERTIAQHAEESEKTGKGDTFKYAWVMDNIKDERERGITIDLAFQKFETPKYFFTLIDAPGHRDFIKNMITGASEADCAILVLSAKEGETDTAIAAGGQAREHAFLLKTLGVNQLIVAVNKMDDSKYSEEAYKKTVEKGEGLVKSVGYKLENVPFIPVSGWKGDNLVKRSENMPWYKGKTLLESFDDFKMAEKPVGKPLRVPIQDVYTITGVGTVPVGRVETGTMKPGDKIVVMPSGAQGEIKSIETHHTEMPSAEAGDNIGFNLRGIEKKDIKRGDVLGDPANPPKVAKEFLAQIIVIHHPTALAPGYTPVMHCHTAQVAAIMSEFVSKINPATGAVEEENPKFLKVGDSAIIKIRPVRPTPIETFKEFPEMGRFALRDMGATIAAGIVKEITEEHKV.

A tr-type G domain is found at Lys8 to Val232. The G1 stretch occupies residues Gly17 to Ser24. A GTP-binding site is contributed by Gly17–Ser24. Ser24 lines the Mg(2+) pocket. The segment at Gly74 to Asp78 is G2. The tract at residues Asp95 to Gly98 is G3. GTP-binding positions include Asp95–His99 and Asn157–Asp160. Positions Asn157–Asp160 are G4. The tract at residues Ser196–Trp198 is G5.

Belongs to the TRAFAC class translation factor GTPase superfamily. Classic translation factor GTPase family. EF-Tu/EF-1A subfamily.

It is found in the cytoplasm. The catalysed reaction is GTP + H2O = GDP + phosphate + H(+). Functionally, GTP hydrolase that promotes the GTP-dependent binding of aminoacyl-tRNA to the A-site of ribosomes during protein biosynthesis. This is Elongation factor 1-alpha from Cenarchaeum symbiosum (strain A).